The chain runs to 632 residues: Polyadenylate-binding protein, cytoplasmic and nuclear (632 aa).

Positions 1-11 are enriched in polar residues; that stretch reads MSAADANQLQE. Residues 1–43 form a disordered region; the sequence is MSAADANQLQESLEKLNLDSAPAAAEEEAVAAESAPAGEEGAD. Positions 31 to 43 are enriched in low complexity; the sequence is AAESAPAGEEGAD. RRM domains are found at residues 52-130, 140-217, 233-310, and 336-413; these read ASLY…WSQR, GNIF…KHIS, TNIY…RAQK, and VNLF…LAQR. The 82-residue stretch at 534-615 folds into the PABC domain; sequence QQRDLAAIIA…ALTAFEEYKN (82 aa).

It belongs to the polyadenylate-binding protein type-1 family.

The protein resides in the cytoplasm. The protein localises to the nucleus. Binds the poly(A) tail of mRNA. Appears to be an important mediator of the multiple roles of the poly(A) tail in mRNA biogenesis, stability and translation. In the nucleus, involved in both mRNA cleavage and polyadenylation. Is also required for efficient mRNA export to the cytoplasm. Acts in concert with a poly(A)-specific nuclease (PAN) to affect poly(A) tail shortening, which may occur concomitantly with either nucleocytoplasmic mRNA transport or translational initiation. In the cytoplasm, stimulates translation initiation and regulates mRNA decay through translation termination-coupled poly(A) shortening, probably mediated by PAN. This chain is Polyadenylate-binding protein, cytoplasmic and nuclear (PAB1), found in Scheffersomyces stipitis (strain ATCC 58785 / CBS 6054 / NBRC 10063 / NRRL Y-11545) (Yeast).